A 396-amino-acid chain; its full sequence is 8-amino-7-oxononanoate synthase (396 aa).

Arginine 19 is a binding site for substrate. A pyridoxal 5'-phosphate-binding site is contributed by 106–107 (GY). Histidine 131 is a substrate binding site. Serine 176, histidine 204, and threonine 233 together coordinate pyridoxal 5'-phosphate. N6-(pyridoxal phosphate)lysine is present on lysine 236. Substrate is bound at residue threonine 350.

It belongs to the class-II pyridoxal-phosphate-dependent aminotransferase family. BioF subfamily. In terms of assembly, homodimer. Pyridoxal 5'-phosphate serves as cofactor.

The enzyme catalyses 6-carboxyhexanoyl-[ACP] + L-alanine + H(+) = (8S)-8-amino-7-oxononanoate + holo-[ACP] + CO2. Its pathway is cofactor biosynthesis; biotin biosynthesis. Functionally, catalyzes the decarboxylative condensation of pimeloyl-[acyl-carrier protein] and L-alanine to produce 8-amino-7-oxononanoate (AON), [acyl-carrier protein], and carbon dioxide. The protein is 8-amino-7-oxononanoate synthase of Pseudomonas syringae pv. syringae (strain B728a).